The following is a 31-amino-acid chain: Cytochrome b6-f complex subunit 6 (31 aa).

Residues 7 to 25 form a helical membrane-spanning segment; sequence YSGFLLAAPIPASAPFTGL.

This sequence belongs to the PetL family. The 4 large subunits of the cytochrome b6-f complex are cytochrome b6, subunit IV (17 kDa polypeptide, PetD), cytochrome f and the Rieske protein, while the 4 small subunits are PetG, PetL, PetM and PetN. The complex functions as a dimer.

It localises to the plastid. Its subcellular location is the chloroplast thylakoid membrane. Component of the cytochrome b6-f complex, which mediates electron transfer between photosystem II (PSII) and photosystem I (PSI), cyclic electron flow around PSI, and state transitions. PetL is important for photoautotrophic growth as well as for electron transfer efficiency and stability of the cytochrome b6-f complex. This Huperzia lucidula (Shining clubmoss) protein is Cytochrome b6-f complex subunit 6.